Consider the following 575-residue polypeptide: Potassium-transporting ATPase potassium-binding subunit (575 aa).

The next 12 membrane-spanning stretches (helical) occupy residues 3-23 (FEGV…VPFF), 69-89 (AVLA…LLQG), 136-156 (CFQF…IAFI), 178-198 (ILMP…VPQS), 266-286 (LLEI…FGVL), 293-313 (GWVL…VAAL), 340-360 (FGWA…TGAV), 367-387 (LTPL…IWGG), 391-411 (GIAY…LMVG), 431-451 (IIFL…LAIP), 498-518 (VVLL…AGGL), and 543-563 (AGTI…LGPI).

Belongs to the KdpA family. The system is composed of three essential subunits: KdpA, KdpB and KdpC.

Its subcellular location is the cell inner membrane. Part of the high-affinity ATP-driven potassium transport (or Kdp) system, which catalyzes the hydrolysis of ATP coupled with the electrogenic transport of potassium into the cytoplasm. This subunit binds the periplasmic potassium ions and delivers the ions to the membrane domain of KdpB through an intramembrane tunnel. In Gloeobacter violaceus (strain ATCC 29082 / PCC 7421), this protein is Potassium-transporting ATPase potassium-binding subunit.